A 1592-amino-acid chain; its full sequence is Laminin subunit gamma-1 (1592 aa).

Positions 1-19 (MRAPVLAVLAVLLLGTVRA) are cleaved as a signal peptide. In terms of domain architecture, Laminin N-terminal spans 29–268 (SPQRCMPEFV…AISDFAVGGR (240 aa)). N-linked (GlcNAc...) asparagine glycosylation is found at asparagine 43 and asparagine 117. 16 disulfides stabilise this stretch: cysteine 269–cysteine 278, cysteine 271–cysteine 288, cysteine 290–cysteine 299, cysteine 302–cysteine 322, cysteine 325–cysteine 334, cysteine 327–cysteine 350, cysteine 353–cysteine 362, cysteine 365–cysteine 378, cysteine 381–cysteine 393, cysteine 383–cysteine 399, cysteine 401–cysteine 410, cysteine 413–cysteine 425, cysteine 428–cysteine 439, cysteine 430–cysteine 446, cysteine 448–cysteine 457, and cysteine 460–cysteine 475. Laminin EGF-like domains lie at 269-324 (CKCN…ECLP), 325-380 (CNCN…PCHA), 381-427 (CQCN…GCRP), and 428-477 (CACN…GCTP). The region spanning 504–672 (SGVEGWTAQQ…AGPSAPWVEI (169 aa)) is the Laminin IV type A domain. 2 N-linked (GlcNAc...) asparagine glycosylation sites follow: asparagine 559 and asparagine 633. 24 cysteine pairs are disulfide-bonded: cysteine 707/cysteine 716, cysteine 709/cysteine 723, cysteine 725/cysteine 734, cysteine 737/cysteine 753, cysteine 756/cysteine 764, cysteine 758/cysteine 775, cysteine 778/cysteine 787, cysteine 790/cysteine 808, cysteine 811/cysteine 825, cysteine 813/cysteine 832, cysteine 835/cysteine 844, cysteine 847/cysteine 864, cysteine 867/cysteine 881, cysteine 869/cysteine 888, cysteine 890/cysteine 899, cysteine 902/cysteine 915, cysteine 918/cysteine 930, cysteine 920/cysteine 937, cysteine 939/cysteine 948, cysteine 951/cysteine 963, cysteine 966/cysteine 978, cysteine 968/cysteine 984, cysteine 986/cysteine 995, and cysteine 998/cysteine 1011. 6 consecutive Laminin EGF-like domains span residues 707–755 (CTCN…DCQP), 756–810 (CPCP…PCRI), 811–866 (CECS…KCRA), 867–917 (CSCN…GCER), 918–965 (CDCH…GCKP), and 966–1013 (CDCD…GCQE). N-linked (GlcNAc...) asparagine glycosylation is found at asparagine 1005, asparagine 1041, asparagine 1048, asparagine 1090, asparagine 1144, asparagine 1158, asparagine 1188, asparagine 1206, asparagine 1253, asparagine 1363, and asparagine 1386. A domain II and I region spans residues 1013-1592 (ECPACYRLVK…CYNTPIIEKP (580 aa)). Positions 1018–1477 (YRLVKDKVNE…DEKMAEMASN (460 aa)) form a coiled coil. The span at 1456-1472 (NQLKKKQAEAESDEKMA) shows a compositional bias: basic and acidic residues. Positions 1456–1489 (NQLKKKQAEAESDEKMAEMASNATKDAESNANNS) are disordered. Residues 1476 to 1489 (SNATKDAESNANNS) show a composition bias toward polar residues. Residues asparagine 1477 and asparagine 1487 are each glycosylated (N-linked (GlcNAc...) asparagine). A coiled-coil region spans residues 1515 to 1579 (VGQLTVLEKT…ANLEDIKNTL (65 aa)).

Laminin is a complex glycoprotein, consisting of three different polypeptide chains (alpha, beta, gamma), which are bound to each other by disulfide bonds into a cross-shaped molecule comprising one long and three short arms with globules at each end.

Its subcellular location is the secreted. The protein resides in the extracellular space. The protein localises to the extracellular matrix. It is found in the basement membrane. In terms of biological role, binding to cells via a high affinity receptor, laminin is thought to mediate the attachment, migration and organization of cells into tissues during embryonic development by interacting with other extracellular matrix components. The sequence is that of Laminin subunit gamma-1 (lamc1) from Xenopus tropicalis (Western clawed frog).